We begin with the raw amino-acid sequence, 1061 residues long: Lysine-specific demethylase jmjd-3.1 (1061 aa).

Disordered stretches follow at residues 30–49 and 256–417; these read VKNS…MRPV and KSLS…KRRT. Positions 271–287 are enriched in polar residues; the sequence is QHTNSVGSSIGTTSGDS. Positions 310–320 are enriched in low complexity; that stretch reads STSSEFTETTS. The segment covering 321 to 330 has biased composition (polar residues); that stretch reads VANQTESNAG. Positions 369 to 417 are required for nuclear localization; that stretch reads KKKEQSATEPPIPRTKRAYTKNPNTIRKRRMKKNQSDDEEDDGPPKRRT. The required for binding of unc-3 and for function in Y-to-PDA transdifferentiation stretch occupies residues 418 to 759; that stretch reads INYQIEFRDA…FGTNIDLLSE (342 aa). Residues 760 to 923 form the JmjC domain; sequence NFKKQMNEIE…LATSIVAHDH (164 aa). Fe cation is bound by residues His811, Glu813, and His891. Cys998, Cys1001, Cys1025, and Cys1028 together coordinate Zn(2+).

It belongs to the UTX family. Interacts with wdr-5.1 and unc-3. Fe(2+) serves as cofactor. In terms of tissue distribution, mainly expressed in head and tail.

It is found in the nucleus. Histone demethylase that specifically demethylates trimethylated 'Lys-27' of histone H3, a mark associated with transcriptional repression, thereby playing a central role in the histone code. Involved in the transcriptional regulation of the heat shock response, unfolded protein response and possibly other stress response target genes. Required for gonad development and organization. Required for the robust transdifferentiation of the Y rectal epithelial cell to the PDA motor neuron during larval development. Acts cell-autonomously in Y-to-PDA transdifferentiation, which depends on the demethylase activity and on recognition of the H3 tail. Cooperates with set-2 and unc-3 to ensure robust Y-to-PDA transdifferentiation. Promotes mitochondrial stress-induced longevity. Involved in lifespan regulation. The protein is Lysine-specific demethylase jmjd-3.1 of Caenorhabditis elegans.